A 547-amino-acid chain; its full sequence is Chaperonin GroEL (547 aa).

ATP-binding positions include 30 to 33 (TLGP), lysine 51, 87 to 91 (DGTTT), glycine 415, 479 to 481 (NAA), and aspartate 495.

It belongs to the chaperonin (HSP60) family. Forms a cylinder of 14 subunits composed of two heptameric rings stacked back-to-back. Interacts with the co-chaperonin GroES.

The protein localises to the cytoplasm. It catalyses the reaction ATP + H2O + a folded polypeptide = ADP + phosphate + an unfolded polypeptide.. In terms of biological role, together with its co-chaperonin GroES, plays an essential role in assisting protein folding. The GroEL-GroES system forms a nano-cage that allows encapsulation of the non-native substrate proteins and provides a physical environment optimized to promote and accelerate protein folding. The polypeptide is Chaperonin GroEL (Marinomonas sp. (strain MWYL1)).